We begin with the raw amino-acid sequence, 150 residues long: Large ribosomal subunit protein bL9 (150 aa).

Belongs to the bacterial ribosomal protein bL9 family.

In terms of biological role, binds to the 23S rRNA. The polypeptide is Large ribosomal subunit protein bL9 (Neisseria meningitidis serogroup C (strain 053442)).